Reading from the N-terminus, the 60-residue chain is UPF0509 protein Ent638_2183 (60 aa).

This sequence belongs to the UPF0509 family.

This Enterobacter sp. (strain 638) protein is UPF0509 protein Ent638_2183.